The chain runs to 396 residues: Acetate kinase (396 aa).

Asn-8 lines the Mg(2+) pocket. Lys-15 contributes to the ATP binding site. Arg-89 provides a ligand contact to substrate. The active-site Proton donor/acceptor is Asp-146. ATP-binding positions include 206-210 (HLGNG), 281-283 (DLR), and 329-333 (GIGEN). Glu-382 is a binding site for Mg(2+).

It belongs to the acetokinase family. Homodimer. Requires Mg(2+) as cofactor. The cofactor is Mn(2+).

Its subcellular location is the cytoplasm. It catalyses the reaction acetate + ATP = acetyl phosphate + ADP. It participates in metabolic intermediate biosynthesis; acetyl-CoA biosynthesis; acetyl-CoA from acetate: step 1/2. Its function is as follows. Catalyzes the formation of acetyl phosphate from acetate and ATP. Can also catalyze the reverse reaction. This is Acetate kinase from Geobacillus kaustophilus (strain HTA426).